The chain runs to 1483 residues: Heme-responsive zinc finger transcription factor HAP1 (1483 aa).

Residues 1-50 (MSNTPYNSSVPSIASMTQSSVSRSPNMHTATTPGANTSSNSPPLHMSSDS) are compositionally biased toward polar residues. Residues 1–56 (MSNTPYNSSVPSIASMTQSSVSRSPNMHTATTPGANTSSNSPPLHMSSDSSKIKRK) are disordered. Zn(2+) contacts are provided by cysteine 64, cysteine 67, cysteine 74, cysteine 81, cysteine 84, and cysteine 93. The segment at residues 64 to 93 (CTICRKRKVKCDKLRPHCQQCTKTGVAHLC) is a DNA-binding region (zn(2)-C6 fungal-type). A coiled-coil region spans residues 105–134 (EKELLKDNELKKLRERVKSLEKTLSKVHSS). The segment at 126 to 208 (KTLSKVHSSP…ANSSSLSISN (83 aa)) is disordered. Over residues 130–142 (KVHSSPSSNSLKS) the composition is skewed to low complexity. Composition is skewed to polar residues over residues 143 to 152 (YNTPESSNLF) and 160 to 176 (TLVN…SHMH). Over residues 177-208 (QQQQQQQQQEQQQDFSRSANANANSSSLSISN) the composition is skewed to low complexity. The tract at residues 244 to 444 (KGDPYLKLLW…NTIPHHQPQS (201 aa)) is heme-responsive; required for HMC formation. 6 HRM repeats span residues 280–285 (KCPINH), 299–304 (KCPVDH), 323–328 (KCPVDH), 347–352 (RCPVDH), 389–394 (KCPVDH), and 415–420 (RCPIDH). 2 stretches are compositionally biased toward polar residues: residues 432 to 447 (STHN…SGSH) and 706 to 734 (QLNA…NPTL). 2 disordered regions span residues 432 to 458 (STHN…SRKH) and 706 to 767 (QLNA…KENQ). The segment covering 735–759 (NNNMSAATTNSSSRSGSADSRSGSN) has biased composition (low complexity). The HRM 7 repeat unit spans residues 1192-1197 (KCPVYQ). Residues 1384 to 1411 (TANTDTSANGSALSTLTSPQGSDLASNS) form a disordered region. Residues 1388 to 1411 (DTSANGSALSTLTSPQGSDLASNS) show a composition bias toward polar residues.

Binds DNA as a homodimer. Interacts with SRO9 and YDJ1. In the absence of heme, binds to at least four cellular proteins, including YDJ1 and SRO9, forming a high-molecular-weight complex (HMC) which results in repression of its activity and dictates its DNA-binding specificity.

It localises to the nucleus. Its function is as follows. Regulation of oxygen dependent gene expression. It modulates the expression of Iso-1 (CYP1) and Iso-2 (CYP3) cytochrome c. In response to heme, promotes transcription of genes encoding functions required for respiration, controlling oxidative damage and repression of anaerobic genes. Binds to the sequence 5'-CGGNNNTNNCGG-3'. Is non-functional in terms of iso-1 cytochrome c expression in strain S288c and its derivatives. This Saccharomyces cerevisiae (Baker's yeast) protein is Heme-responsive zinc finger transcription factor HAP1 (HAP1).